The following is an 800-amino-acid chain: Fibroblast growth factor receptor 3 (800 aa).

The first 20 residues, 1–20 (MVPLCLLLYLATLVFPPVYS), serve as a signal peptide directing secretion. An Ig-like C2-type 1 domain is found at 21-122 (AHLLSPEPTD…YTVKVIDSLS (102 aa)). The Extracellular segment spans residues 21-363 (AHLLSPEPTD…EMEREDDYAD (343 aa)). Cysteines 55 and 101 form a disulfide. Residues asparagine 77, asparagine 90, and asparagine 112 are each glycosylated (N-linked (GlcNAc...) asparagine). Positions 124–136 (GDDEDYDEDEDEA) are enriched in acidic residues. The interval 124–143 (GDDEDYDEDEDEAGNGNAEA) is disordered. Ig-like C2-type domains lie at 144 to 237 (PYWT…YQLD) and 246 to 348 (PILQ…AWLT). A disulfide bond links cysteine 169 and cysteine 221. 5 N-linked (GlcNAc...) asparagine glycosylation sites follow: asparagine 218, asparagine 255, asparagine 287, asparagine 308, and asparagine 321. Cysteine 268 and cysteine 332 are disulfide-bonded. Residues 364-384 (ILIYVTSCVLFILTMVIIILC) traverse the membrane as a helical segment. Residues 385–800 (RMWINTQKTL…HHHSNGVIRT (416 aa)) lie on the Cytoplasmic side of the membrane. In terms of domain architecture, Protein kinase spans 460-739 (LTLGKPLGEG…RQLVEDHDRV (280 aa)). ATP-binding positions include 466–474 (LGEGCFGQV) and lysine 496. Aspartate 605 functions as the Proton acceptor in the catalytic mechanism. Tyrosine 635, tyrosine 636, tyrosine 712, and tyrosine 748 each carry phosphotyrosine; by autocatalysis. The span at 764–773 (DSNSTCSSGD) shows a compositional bias: polar residues. Residues 764 to 800 (DSNSTCSSGDDSVFAHDPLPEEPCLPKHHHSNGVIRT) are disordered.

The protein belongs to the protein kinase superfamily. Tyr protein kinase family. Fibroblast growth factor receptor subfamily. Monomer. Homodimer after ligand binding. Post-translationally, autophosphorylated. Binding of FGF family members together with heparan sulfate proteoglycan or heparin promotes receptor dimerization and autophosphorylation on tyrosine residues. Autophosphorylation occurs in trans between the two FGFR molecules present in the dimer.

It localises to the cell membrane. The enzyme catalyses L-tyrosyl-[protein] + ATP = O-phospho-L-tyrosyl-[protein] + ADP + H(+). Present in an inactive conformation in the absence of bound ligand. Ligand binding leads to dimerization and activation by autophosphorylation on tyrosine residues. In terms of biological role, tyrosine-protein kinase that acts as a cell-surface receptor for fibroblast growth factors and plays an essential role in the regulation of cell proliferation, differentiation and apoptosis. Plays an essential role in the regulation of chondrocyte differentiation, proliferation and apoptosis, and is required for normal skeleton development. Regulates both osteogenesis and postnatal bone mineralization by osteoblasts. Promotes apoptosis in chondrocytes, but can also promote cancer cell proliferation. Phosphorylates PLCG1, CBL and FRS2. Ligand binding leads to the activation of several signaling cascades. Activation of PLCG1 leads to the production of the cellular signaling molecules diacylglycerol and inositol 1,4,5-trisphosphate. Phosphorylation of FRS2 triggers recruitment of GRB2, GAB1, PIK3R1 and SOS1, and mediates activation of RAS, MAPK1/ERK2, MAPK3/ERK1 and the MAP kinase signaling pathway, as well as of the AKT1 signaling pathway. This is Fibroblast growth factor receptor 3 (fgfr3) from Danio rerio (Zebrafish).